The sequence spans 269 residues: MISLSDLRKFKAEGRKFSCLTCYDASMAKAMELAEIDTILIGDSLGMAIQGRDSTLPVTVEDMAYHTAAVRRGNQHALIMTDLPFMSYATLNDALQNAKTVMQAGAQMIKIEGGAWLSETVQVLTRNGVPVCVHLGLTPQSVHVFGGYKLQARTREAADQLIADCTAVVEAGAAVLLLECVPAQLGQEIAELFPNTPVIGIGAGNATDGQVLVVQDMLGLTFGRVARFVRNFMKEQSGETAILDAFKAFHAAVQDQSFPAKEHTFQVEL.

Mg(2+) is bound by residues D43 and D82. Residues 43-44 (DS), D82, and K110 each bind 3-methyl-2-oxobutanoate. E112 lines the Mg(2+) pocket. Residue E179 is the Proton acceptor of the active site.

It belongs to the PanB family. Homodecamer; pentamer of dimers. The cofactor is Mg(2+).

The protein localises to the cytoplasm. The enzyme catalyses 3-methyl-2-oxobutanoate + (6R)-5,10-methylene-5,6,7,8-tetrahydrofolate + H2O = 2-dehydropantoate + (6S)-5,6,7,8-tetrahydrofolate. It functions in the pathway cofactor biosynthesis; (R)-pantothenate biosynthesis; (R)-pantoate from 3-methyl-2-oxobutanoate: step 1/2. In terms of biological role, catalyzes the reversible reaction in which hydroxymethyl group from 5,10-methylenetetrahydrofolate is transferred onto alpha-ketoisovalerate to form ketopantoate. This chain is 3-methyl-2-oxobutanoate hydroxymethyltransferase, found in Acinetobacter baumannii (strain AB307-0294).